The chain runs to 126 residues: Small ribosomal subunit protein uS11 (126 aa).

The protein belongs to the universal ribosomal protein uS11 family. Part of the 30S ribosomal subunit. Interacts with proteins S7 and S18. Binds to IF-3.

Its function is as follows. Located on the platform of the 30S subunit, it bridges several disparate RNA helices of the 16S rRNA. Forms part of the Shine-Dalgarno cleft in the 70S ribosome. This chain is Small ribosomal subunit protein uS11, found in Orientia tsutsugamushi (strain Boryong) (Rickettsia tsutsugamushi).